The sequence spans 222 residues: Pyridoxal phosphate homeostasis protein (222 aa).

Residue Lys35 is modified to N6-(pyridoxal phosphate)lysine.

It belongs to the pyridoxal phosphate-binding protein YggS/PROSC family.

Functionally, pyridoxal 5'-phosphate (PLP)-binding protein, which is involved in PLP homeostasis. The protein is Pyridoxal phosphate homeostasis protein of Helicobacter pylori (strain J99 / ATCC 700824) (Campylobacter pylori J99).